Here is a 205-residue protein sequence, read N- to C-terminus: Guanylate kinase (205 aa).

One can recognise a Guanylate kinase-like domain in the interval 3–183 (GFVLLISGPS…SYEALRAILI (181 aa)). Residue 10 to 17 (GPSGAGKS) participates in ATP binding.

Belongs to the guanylate kinase family.

The protein resides in the cytoplasm. The catalysed reaction is GMP + ATP = GDP + ADP. Essential for recycling GMP and indirectly, cGMP. In Campylobacter jejuni (strain RM1221), this protein is Guanylate kinase.